The following is a 352-amino-acid chain: MKVLGLETSCDETGLAIFDSEQVTSDNKGLLGQVLYSQIELHALYGGVVPELASRDHIRKLVPLFNELLQQCNITKDEIDAVAYTKGPGLIGALMTGALFGRSLAYGLDIPAIGVHHMEGHLLAPLMGANPPAFPFVSLLVSGGHTLLIAAHGIGQYEILGESIDDAAGECFDKAAKMLGLPYPGGPNIAKLAESGNSDAYSLPRPMLHRGLDFSFSGMKTAVHNLIKDTPCSGGSGNGSDSDPQVRADIAASFQHAVVDTLVKKCVKALKQVNMSRLVIAGGVSANSHLRKTLERELAKINATVHYAPPALCTDNGAMIAYAGYERLQAGQADDLAVSCVPRWPMTELPAV.

2 residues coordinate Fe cation: histidine 117 and histidine 121. Residues 140-144, aspartate 173, glycine 186, and asparagine 287 each bind substrate; that span reads LVSGG. Aspartate 315 provides a ligand contact to Fe cation.

The protein belongs to the KAE1 / TsaD family. It depends on Fe(2+) as a cofactor.

The protein localises to the cytoplasm. It catalyses the reaction L-threonylcarbamoyladenylate + adenosine(37) in tRNA = N(6)-L-threonylcarbamoyladenosine(37) in tRNA + AMP + H(+). In terms of biological role, required for the formation of a threonylcarbamoyl group on adenosine at position 37 (t(6)A37) in tRNAs that read codons beginning with adenine. Is involved in the transfer of the threonylcarbamoyl moiety of threonylcarbamoyl-AMP (TC-AMP) to the N6 group of A37, together with TsaE and TsaB. TsaD likely plays a direct catalytic role in this reaction. The protein is tRNA N6-adenosine threonylcarbamoyltransferase of Psychrobacter cryohalolentis (strain ATCC BAA-1226 / DSM 17306 / VKM B-2378 / K5).